The primary structure comprises 140 residues: Cystatin-C (140 aa).

An N-terminal signal peptide occupies residues 1–20 (MASPLRSLMLLLAVLAVAWA). The Secondary area of contact signature appears at 75–79 (QLVAG). Intrachain disulfides connect Cys-93/Cys-103 and Cys-117/Cys-137. Asn-99 carries an N-linked (GlcNAc...) asparagine glycan.

The protein belongs to the cystatin family.

The protein localises to the secreted. Its function is as follows. As an inhibitor of cysteine proteinases, this protein is thought to serve an important physiological role as a local regulator of this enzyme activity. Known to inhibit cathepsin B, H, and L. This Rattus norvegicus (Rat) protein is Cystatin-C (Cst3).